Here is a 120-residue protein sequence, read N- to C-terminus: Glycine cleavage system H protein (120 aa).

A Lipoyl-binding domain is found at aspartate 20–aspartate 102. Residue lysine 61 is modified to N6-lipoyllysine.

It belongs to the GcvH family. The glycine cleavage system is composed of four proteins: P, T, L and H. The cofactor is (R)-lipoate.

The glycine cleavage system catalyzes the degradation of glycine. The H protein shuttles the methylamine group of glycine from the P protein to the T protein. This is Glycine cleavage system H protein from Deinococcus radiodurans (strain ATCC 13939 / DSM 20539 / JCM 16871 / CCUG 27074 / LMG 4051 / NBRC 15346 / NCIMB 9279 / VKM B-1422 / R1).